Reading from the N-terminus, the 477-residue chain is Glycogen synthase (477 aa).

Lys-16 lines the ADP-alpha-D-glucose pocket.

Belongs to the glycosyltransferase 1 family. Bacterial/plant glycogen synthase subfamily.

The enzyme catalyses [(1-&gt;4)-alpha-D-glucosyl](n) + ADP-alpha-D-glucose = [(1-&gt;4)-alpha-D-glucosyl](n+1) + ADP + H(+). The protein operates within glycan biosynthesis; glycogen biosynthesis. Functionally, synthesizes alpha-1,4-glucan chains using ADP-glucose. This Oceanobacillus iheyensis (strain DSM 14371 / CIP 107618 / JCM 11309 / KCTC 3954 / HTE831) protein is Glycogen synthase.